The chain runs to 165 residues: Type 3 secretion system regulator YopR (165 aa).

It belongs to the YopR family.

It localises to the secreted. Functionally, may be involved in the regulation of the assembly of the type III secretion system (T3SS), also called injectisome, which is used to inject bacterial effector proteins into eukaryotic host cells. May control the secretion and/or polymerization of YscF/SctF, the principal component of the needle filament, thereby impacting the assembly of the T3SS. Involved in pathogenesis. The polypeptide is Type 3 secretion system regulator YopR (Yersinia pestis).